Reading from the N-terminus, the 95-residue chain is MTVKCKAEESLTCSCVDVGTIIDGSDCSVEVHQFYSTEADANAVLERLTKKARNTESDPCEIKSEIVAVENGVQLNASFTFSCQAEAMIFELANR.

This sequence belongs to the UPF0381 family.

The protein is UPF0381 protein HI_0400 of Haemophilus influenzae (strain ATCC 51907 / DSM 11121 / KW20 / Rd).